The following is a 273-amino-acid chain: Large ribosomal subunit protein uL2 (273 aa).

2 disordered regions span residues 28 to 54 (KPYA…TRHI) and 221 to 273 (RGTA…RRTK). A compositionally biased stretch (low complexity) spans 39–48 (KSGGRNNNGR).

This sequence belongs to the universal ribosomal protein uL2 family. As to quaternary structure, part of the 50S ribosomal subunit. Forms a bridge to the 30S subunit in the 70S ribosome.

In terms of biological role, one of the primary rRNA binding proteins. Required for association of the 30S and 50S subunits to form the 70S ribosome, for tRNA binding and peptide bond formation. It has been suggested to have peptidyltransferase activity; this is somewhat controversial. Makes several contacts with the 16S rRNA in the 70S ribosome. The sequence is that of Large ribosomal subunit protein uL2 from Pectobacterium carotovorum subsp. carotovorum (strain PC1).